The primary structure comprises 191 residues: ECF RNA polymerase sigma factor ShbA (191 aa).

The sigma-70 factor domain-2 stretch occupies residues 27–98; it reads LLAHVHPLAL…HKVADLQRAA (72 aa). The disordered stretch occupies residues 100 to 122; sequence RHPGSTAVPSDEMPERPDDSLGP. A compositionally biased stretch (basic and acidic residues) spans 112–122; sequence MPERPDDSLGP. The tract at residues 138-187 is sigma-70 factor domain-4; it reads LLANLPENQRELLVLRVAVGLTAEETGQMLGMSPGAVRVAQHRALSRLRA. The H-T-H motif DNA-binding region spans 160 to 179; the sequence is AEETGQMLGMSPGAVRVAQH.

It belongs to the sigma-70 factor family. ECF subfamily.

Its function is as follows. Sigma factors are initiation factors that promote the attachment of RNA polymerase to specific initiation sites and are then released. Extracytoplasmic function (ECF) sigma factors are held in an inactive form by an anti-sigma factor until released. This alternative sigma factor governs the transcription of the principal sigma factor HrdB (SigA) throughout growth. Acts by binding to the promoter region. This Streptomyces griseus subsp. griseus (strain JCM 4626 / CBS 651.72 / NBRC 13350 / KCC S-0626 / ISP 5235) protein is ECF RNA polymerase sigma factor ShbA.